We begin with the raw amino-acid sequence, 307 residues long: MRGQPRPKLRRMTEQQTGTPQLKQGFAEMFKGGVIMDVVTADQARIAEAAGATAVMALERVPADIRKDGGVARMSDPKMIREIMAAVSIPVMAKVRIGHVVEAQILQAIGVDFIDESEVLTPADEQFHILKRDFKVPFVCGAKNLGEALRRVGEGASMIRTKGEAGTGNVVEAVRHARAVLGDIRAVQSRPAEELMTVARDLQAPYDLVQYVHAHGQLPVVNFAAGGVATPADAALMMQLGLDGVFVGSGIFKSANPERRAQAIVRAVTHFQNPDILAEVSEDLGAPMTGINIDELIPEARLASRGW.

Positions 1–10 (MRGQPRPKLR) are enriched in basic residues. The disordered stretch occupies residues 1–20 (MRGQPRPKLRRMTEQQTGTP). A D-ribose 5-phosphate-binding site is contributed by Asp37. Catalysis depends on Lys94, which acts as the Schiff-base intermediate with D-ribose 5-phosphate. Residue Gly166 coordinates D-ribose 5-phosphate. Arg178 serves as a coordination point for D-glyceraldehyde 3-phosphate. Residues Gly227 and 248-249 (GS) contribute to the D-ribose 5-phosphate site.

Belongs to the PdxS/SNZ family. In the presence of PdxT, forms a dodecamer of heterodimers.

The enzyme catalyses aldehydo-D-ribose 5-phosphate + D-glyceraldehyde 3-phosphate + L-glutamine = pyridoxal 5'-phosphate + L-glutamate + phosphate + 3 H2O + H(+). It participates in cofactor biosynthesis; pyridoxal 5'-phosphate biosynthesis. In terms of biological role, catalyzes the formation of pyridoxal 5'-phosphate from ribose 5-phosphate (RBP), glyceraldehyde 3-phosphate (G3P) and ammonia. The ammonia is provided by the PdxT subunit. Can also use ribulose 5-phosphate and dihydroxyacetone phosphate as substrates, resulting from enzyme-catalyzed isomerization of RBP and G3P, respectively. This Deinococcus radiodurans (strain ATCC 13939 / DSM 20539 / JCM 16871 / CCUG 27074 / LMG 4051 / NBRC 15346 / NCIMB 9279 / VKM B-1422 / R1) protein is Pyridoxal 5'-phosphate synthase subunit PdxS.